A 227-amino-acid chain; its full sequence is Claudin-15 (227 aa).

Position 1 (Met1) is a topological domain, cytoplasmic. Residues 2 to 24 (SIAVETFGFFMSALGLLMLGVTL) form a helical membrane-spanning segment. Over 25–74 (PNSYWRVSTVHGNVITTNTIFENLWYSCATDSLGVSNCWDFPSMLALSGY) the chain is Extracellular. A disulfide bridge connects residues Cys52 and Cys62. The helical transmembrane segment at 75–99 (VQGCRALMITAILLGFLGLFLGMVG) threads the bilayer. Over 100-115 (LRCTNVGNIDLSRKAK) the chain is Cytoplasmic. Residue Ser111 is modified to Phosphoserine. The helical transmembrane segment at 116 to 140 (LLAIAGAFHILAGACGMVAISWYAV) threads the bilayer. The Extracellular segment spans residues 141–159 (NITTDFFNPLYVGTKYELG). Residues 146-147 (FF) form an important for the formation of tight-junction strand-like structures region. Residues 160-182 (SALYLGWSASLLSILGGICVFST) traverse the membrane as a helical segment. Over 183 to 227 (CCCDSKEDPATRVGLPYKPSTVVTARATSDESDVSFGKYGKNAYV) the chain is Cytoplasmic. Phosphoserine is present on residues Ser211, Ser214, and Ser217.

This sequence belongs to the claudin family. As to quaternary structure, can form homo- and heteropolymeric tight junction strands. Palmitoylated. Detected in kidney, jejunum and colon (at protein level).

Its subcellular location is the cell junction. The protein localises to the tight junction. It is found in the cell membrane. The enzyme catalyses Na(+)(in) = Na(+)(out). It catalyses the reaction K(+)(in) = K(+)(out). The catalysed reaction is Cs(+)(in) = Cs(+)(out). It carries out the reaction Rb(+)(in) = Rb(+)(out). The enzyme catalyses Li(+)(in) = Li(+)(out). It catalyses the reaction NH4(+)(in) = NH4(+)(out). The catalysed reaction is methylamine(out) = methylamine(in). It carries out the reaction H2O(in) = H2O(out). Functionally, forms paracellular channels: polymerizes in tight junction strands with cation- and water-selective channels through the strands, conveying epithelial permeability in a process known as paracellular tight junction permeability. In intestinal epithelium, allows for sodium and water fluxes from the peritoneal side to the lumen of the intestine to regulate nutrient absorption and intestinal morphogenesis. This Rattus norvegicus (Rat) protein is Claudin-15.